We begin with the raw amino-acid sequence, 430 residues long: Transcriptional regulatory protein RXT2 (430 aa).

Residues Glu-408–Ala-430 form a disordered region.

Belongs to the RXT2 family. Component of the RPD3C(L) complex composed of at least ASH1, CTI6, DEP1, PHO23, RPD3, RXT2, RXT3, SAP30, SDS3, SIN3, UME1 and UME6.

Its subcellular location is the nucleus. In terms of biological role, component of the RPD3C(L) histone deacetylase complex (HDAC) responsible for the deacetylation of lysine residues on the N-terminal part of the core histones (H2A, H2B, H3 and H4). Histone deacetylation gives a tag for epigenetic repression and plays an important role in transcriptional regulation, cell cycle progression and developmental events. The sequence is that of Transcriptional regulatory protein RXT2 (RXT2) from Saccharomyces cerevisiae (strain ATCC 204508 / S288c) (Baker's yeast).